The sequence spans 394 residues: Tryptophan synthase beta chain (394 aa).

At Lys-90 the chain carries N6-(pyridoxal phosphate)lysine.

The protein belongs to the TrpB family. As to quaternary structure, tetramer of two alpha and two beta chains. Pyridoxal 5'-phosphate is required as a cofactor.

It catalyses the reaction (1S,2R)-1-C-(indol-3-yl)glycerol 3-phosphate + L-serine = D-glyceraldehyde 3-phosphate + L-tryptophan + H2O. The protein operates within amino-acid biosynthesis; L-tryptophan biosynthesis; L-tryptophan from chorismate: step 5/5. In terms of biological role, the beta subunit is responsible for the synthesis of L-tryptophan from indole and L-serine. This chain is Tryptophan synthase beta chain, found in Bacteroides thetaiotaomicron (strain ATCC 29148 / DSM 2079 / JCM 5827 / CCUG 10774 / NCTC 10582 / VPI-5482 / E50).